The primary structure comprises 158 residues: Regulator of sigma D (158 aa).

Belongs to the Rsd/AlgQ family. In terms of assembly, interacts with RpoD.

The protein resides in the cytoplasm. Functionally, binds RpoD and negatively regulates RpoD-mediated transcription activation by preventing the interaction between the primary sigma factor RpoD with the catalytic core of the RNA polymerase and with promoter DNA. May be involved in replacement of the RNA polymerase sigma subunit from RpoD to RpoS during the transition from exponential growth to the stationary phase. The polypeptide is Regulator of sigma D (Escherichia coli O127:H6 (strain E2348/69 / EPEC)).